The sequence spans 78 residues: Probable [Fe-S]-dependent transcriptional repressor (78 aa).

Cysteine 56, cysteine 61, cysteine 64, and cysteine 70 together coordinate iron-sulfur cluster.

It belongs to the FeoC family.

Functionally, may function as a transcriptional regulator that controls feoABC expression. In Escherichia fergusonii (strain ATCC 35469 / DSM 13698 / CCUG 18766 / IAM 14443 / JCM 21226 / LMG 7866 / NBRC 102419 / NCTC 12128 / CDC 0568-73), this protein is Probable [Fe-S]-dependent transcriptional repressor.